Reading from the N-terminus, the 663-residue chain is Subtilisin-like serine protease (663 aa).

Positions 1–23 (MKKFGAVVLALFLVGLMAGSVLA) are cleaved as a signal peptide. The propeptide at 24-136 (APQKPAVRNV…IQEDYVVKVA (113 aa)) is removed in mature form. One can recognise a Peptidase S8 domain in the interval 139–439 (TEGLDESAAQ…AGRVNAYKAA (301 aa)). Active-site charge relay system residues include D170, H203, and S382. 9 residues coordinate Ca(2+): P420, I423, D483, L484, D485, D497, Y498, T501, and E507. The segment at 537–565 (VSDGSLGQPSGGGSEPSPSPSPEPTVDEK) is disordered. A propeptide spans 563 to 663 (DEKTFTGTVH…YQLDAKVYYG (101 aa)) (removed in mature form).

This sequence belongs to the peptidase S8 family. As to quaternary structure, monomer.

It catalyses the reaction Hydrolysis of proteins with broad specificity for peptide bonds, and a preference for a large uncharged residue in P1. Hydrolyzes peptide amides.. Its activity is regulated as follows. Resistant to treatment with 5% SDS, 8 M urea, 10% Triton X-100 or 10% Tween-20. Fully active although less stable in the presence of 10 mM EDTA. Activity not affected by the absence or presence of 10 mM CaCl(2). Unstable in the presence of 2 M or over GdnHCl and loses 35% and 99% of its activity upon incubation with 2 and 4 M GdnHCl, respectively, for 1 hour at 55 degrees Celsius. Nearly fully loses activity upon incubation at pH 2.0. Its function is as follows. Serine protease with a broad substrate specificity. The protein is Subtilisin-like serine protease of Thermococcus kodakarensis (strain ATCC BAA-918 / JCM 12380 / KOD1) (Pyrococcus kodakaraensis (strain KOD1)).